The following is a 702-amino-acid chain: Polyribonucleotide nucleotidyltransferase (702 aa).

Residues D493 and D499 each coordinate Mg(2+). The region spanning 560–619 is the KH domain; it reads PRLLTMRIDPERIRDVIGKGGATIRGLTEETGTNIDISDEGVVTIASADKAAAEEAKKRI. The region spanning 629–697 is the S1 motif domain; that stretch reads GKVYDGKVAK…RQGRIRLSMK (69 aa).

Belongs to the polyribonucleotide nucleotidyltransferase family. In terms of assembly, component of the RNA degradosome, which is a multiprotein complex involved in RNA processing and mRNA degradation. The cofactor is Mg(2+).

It is found in the cytoplasm. The enzyme catalyses RNA(n+1) + phosphate = RNA(n) + a ribonucleoside 5'-diphosphate. Functionally, involved in mRNA degradation. Catalyzes the phosphorolysis of single-stranded polyribonucleotides processively in the 3'- to 5'-direction. This is Polyribonucleotide nucleotidyltransferase from Halorhodospira halophila (strain DSM 244 / SL1) (Ectothiorhodospira halophila (strain DSM 244 / SL1)).